A 28-amino-acid polypeptide reads, in one-letter code: 3,4-dihydroxybenzoate decarboxylase (28 aa).

In terms of assembly, homopentamer.

The catalysed reaction is 3,4-dihydroxybenzoate + H(+) = catechol + CO2. With respect to regulation, inhibited by oxygen. Completely inhibited by HgCl(2). Partially inhibited by ZnSO(4), 2,3,4-trihydroxybeonzoate and 3,4,5-trihydroxybeonzoate. Unaffected by KCl, MnCl(2) or EDTA. Not stimulated by thiamine phosphate, pyridoxal 5'-phosphate or biotin. Not inhibited by hydroxylamine, NaBH(4) or avidin. Reversibly catalyzes the decarboxylation of 3,4-dihydroxybenzoate to catechol. Inactive toward 4-hydroxybenzoate and other benzoate derivatives. This is 3,4-dihydroxybenzoate decarboxylase from Sedimentibacter hydroxybenzoicus (Clostridium hydroxybenzoicum).